Reading from the N-terminus, the 151-residue chain is 3-hydroxyacyl-[acyl-carrier-protein] dehydratase FabZ (151 aa).

H56 is an active-site residue.

The protein belongs to the thioester dehydratase family. FabZ subfamily.

The protein localises to the cytoplasm. It catalyses the reaction a (3R)-hydroxyacyl-[ACP] = a (2E)-enoyl-[ACP] + H2O. Involved in unsaturated fatty acids biosynthesis. Catalyzes the dehydration of short chain beta-hydroxyacyl-ACPs and long chain saturated and unsaturated beta-hydroxyacyl-ACPs. This is 3-hydroxyacyl-[acyl-carrier-protein] dehydratase FabZ from Rhodopseudomonas palustris (strain HaA2).